We begin with the raw amino-acid sequence, 289 residues long: ATP synthase gamma chain (289 aa).

Belongs to the ATPase gamma chain family. F-type ATPases have 2 components, CF(1) - the catalytic core - and CF(0) - the membrane proton channel. CF(1) has five subunits: alpha(3), beta(3), gamma(1), delta(1), epsilon(1). CF(0) has three main subunits: a, b and c.

The protein localises to the cell inner membrane. Produces ATP from ADP in the presence of a proton gradient across the membrane. The gamma chain is believed to be important in regulating ATPase activity and the flow of protons through the CF(0) complex. This is ATP synthase gamma chain from Histophilus somni (strain 2336) (Haemophilus somnus).